Consider the following 405-residue polypeptide: Molybdopterin molybdenumtransferase 2 (405 aa).

Belongs to the MoeA family. The cofactor is Mg(2+).

It carries out the reaction adenylyl-molybdopterin + molybdate = Mo-molybdopterin + AMP + H(+). Its pathway is cofactor biosynthesis; molybdopterin biosynthesis. Functionally, catalyzes the insertion of molybdate into adenylated molybdopterin with the concomitant release of AMP. In Mycobacterium tuberculosis (strain CDC 1551 / Oshkosh), this protein is Molybdopterin molybdenumtransferase 2 (moaE2).